The following is a 417-amino-acid chain: Histidine biosynthesis bifunctional protein his7 (417 aa).

The phosphoribosyl-AMP cyclohydrolase stretch occupies residues 225–299 (GLVYSSKESV…HLDTLHCFGQ (75 aa)). The tract at residues 303 to 387 (LCQLEKTLID…ISRHLDLKHR (85 aa)) is phosphoribosyl-ATP pyrophosphohydrolase.

It localises to the cytoplasm. It carries out the reaction 1-(5-phospho-beta-D-ribosyl)-5'-AMP + H2O = 1-(5-phospho-beta-D-ribosyl)-5-[(5-phospho-beta-D-ribosylamino)methylideneamino]imidazole-4-carboxamide. The catalysed reaction is 1-(5-phospho-beta-D-ribosyl)-ATP + H2O = 1-(5-phospho-beta-D-ribosyl)-5'-AMP + diphosphate + H(+). It participates in amino-acid biosynthesis; L-histidine biosynthesis; L-histidine from 5-phospho-alpha-D-ribose 1-diphosphate: step 2/9. It functions in the pathway amino-acid biosynthesis; L-histidine biosynthesis; L-histidine from 5-phospho-alpha-D-ribose 1-diphosphate: step 3/9. The protein is Histidine biosynthesis bifunctional protein his7 of Schizosaccharomyces pombe (strain 972 / ATCC 24843) (Fission yeast).